A 402-amino-acid chain; its full sequence is GTPase HflX (402 aa).

Residues 181–350 form the Hflx-type G domain; the sequence is DTVGLIGYTN…MIIEHLNLSI (170 aa). Residues 187 to 194, 212 to 216, 233 to 236, 300 to 303, and 328 to 330 contribute to the GTP site; these read GYTNAGKT, FTTLT, DTVG, NKVD, and SAK. Mg(2+)-binding residues include Thr194 and Thr214.

Belongs to the TRAFAC class OBG-HflX-like GTPase superfamily. HflX GTPase family. In terms of assembly, monomer. Associates with the 50S ribosomal subunit. Mg(2+) is required as a cofactor.

The protein resides in the cytoplasm. In terms of biological role, GTPase that associates with the 50S ribosomal subunit and may have a role during protein synthesis or ribosome biogenesis. The chain is GTPase HflX from Methanocaldococcus jannaschii (strain ATCC 43067 / DSM 2661 / JAL-1 / JCM 10045 / NBRC 100440) (Methanococcus jannaschii).